The chain runs to 627 residues: MNITQAYKRSLWWSMDMVGATGSVERKMLTAVGLQFLAAGGMAFLTVFTAGTVQLIGVGGMLALSVVAFYNTYLIAEADFVEPLVALEDAADDIAAGEFERADIPSSKRDDEIASLVASFDGMQSNLEVASRQADALARQAFDDPALDESVPGAFGESITEMADSLEAYTAELEDKTAELEHQQAELERQSEQLRALVDALSEATDAARAGDLTATVDAAALDVTDDHRAAVEDFNQLLETLADTISDIQSFSDAVLAVSRTTDERVDAVADRSAAVSESVTEIADGANQQTNQLNNIAAEMDTVSATVEEIAASANDVAKTAQAAADRGEDGRGEVEETIEALRALREQSQAVAETVESLAAEVERIDGITALIEDIAEETNMLALNASIEAARTGSDGDGFAVVADEVKDLAEETREQAADISEIVDAVTEKAEDASIAIGEVDAEVERKITKAEGVLRDFEAIVDEVANVNHAVQEISDATDQGAQSVTDVVGMVEEVASVSEETAAESDTVADNAAEQTDATDEVADQMDELAEQTAALAGMLDDFTVPADAGTADQSVADDSPTAQPPAADDEPAAAVVDQPQPASDAEDEEGVPDSGGESVAVSDGGWADDRSSFTWADSQ.

The next 2 membrane-spanning stretches (helical) occupy residues 28-48 (MLTAVGLQFLAAGGMAFLTVF) and 55-75 (LIGVGGMLALSVVAFYNTYLI). 2 consecutive HAMP domains span residues 78–132 (ADFV…VASR) and 192–247 (EQLR…DTIS). The region spanning 266–502 (RVDAVADRSA…DVVGMVEEVA (237 aa)) is the Methyl-accepting transducer domain. A glutamate methyl ester (Glu) mark is found at Glu-310, Glu-416, and Glu-507. Disordered regions lie at residues 505–527 (SEETAAESDTVADNAAEQTDATD) and 557–627 (GTAD…ADSQ). Residues 580 to 590 (AAAVVDQPQPA) are compositionally biased toward low complexity.

It belongs to the methyl-accepting chemotaxis (MCP) protein family. Interacts with CheA, CheY and CheW1. Post-translationally, methylated by CheR.

The protein localises to the cell membrane. Its function is as follows. Mediates bacteriorhodopsin- and halorhodopsin-dependent photoresponses by detecting membrane potential changes. Probably transduces the signal to the histidine kinase CheA. The chain is Transducer protein MpcT (mpcT) from Halobacterium salinarum (strain ATCC 29341 / DSM 671 / R1).